A 215-amino-acid polypeptide reads, in one-letter code: Thiamine import ATP-binding protein ThiQ (215 aa).

One can recognise an ABC transporter domain in the interval 2-215 (IYLNNVILND…GQISQLQKGV (214 aa)). Residue 32-39 (GESGAGKS) coordinates ATP.

Belongs to the ABC transporter superfamily. Thiamine importer (TC 3.A.1.19.1) family. In terms of assembly, the complex is composed of two ATP-binding proteins (ThiQ), two transmembrane proteins (ThiP) and a solute-binding protein (ThiB).

The protein resides in the cell inner membrane. It catalyses the reaction thiamine(out) + ATP + H2O = thiamine(in) + ADP + phosphate + H(+). In terms of biological role, part of the ABC transporter complex ThiBPQ involved in thiamine import. Responsible for energy coupling to the transport system. The sequence is that of Thiamine import ATP-binding protein ThiQ from Haemophilus influenzae (strain ATCC 51907 / DSM 11121 / KW20 / Rd).